A 61-amino-acid chain; its full sequence is Large ribosomal subunit protein eL37 (61 aa).

Zn(2+) contacts are provided by Cys-20, Cys-23, Cys-35, and Cys-38. The C4-type zinc finger occupies 20 to 38; it reads CRRCGRRAYHVRKKRCAAC.

The protein belongs to the eukaryotic ribosomal protein eL37 family. Requires Zn(2+) as cofactor.

Its function is as follows. Binds to the 23S rRNA. The sequence is that of Large ribosomal subunit protein eL37 (rpl37e) from Methanocaldococcus jannaschii (strain ATCC 43067 / DSM 2661 / JAL-1 / JCM 10045 / NBRC 100440) (Methanococcus jannaschii).